The following is a 691-amino-acid chain: DNA ligase (691 aa).

NAD(+) is bound by residues 41–45 (DAEYD), 90–91 (SL), and Glu-130. Residue Lys-132 is the N6-AMP-lysine intermediate of the active site. NAD(+)-binding residues include Arg-153, Glu-190, Lys-307, and Lys-331. Residues Cys-425, Cys-428, Cys-443, and Cys-449 each contribute to the Zn(2+) site. The BRCT domain occupies 610–691 (APQGVLAGKT…LHQLLEGNTP (82 aa)).

Belongs to the NAD-dependent DNA ligase family. LigA subfamily. It depends on Mg(2+) as a cofactor. Mn(2+) is required as a cofactor.

The catalysed reaction is NAD(+) + (deoxyribonucleotide)n-3'-hydroxyl + 5'-phospho-(deoxyribonucleotide)m = (deoxyribonucleotide)n+m + AMP + beta-nicotinamide D-nucleotide.. DNA ligase that catalyzes the formation of phosphodiester linkages between 5'-phosphoryl and 3'-hydroxyl groups in double-stranded DNA using NAD as a coenzyme and as the energy source for the reaction. It is essential for DNA replication and repair of damaged DNA. This chain is DNA ligase, found in Burkholderia cenocepacia (strain ATCC BAA-245 / DSM 16553 / LMG 16656 / NCTC 13227 / J2315 / CF5610) (Burkholderia cepacia (strain J2315)).